The chain runs to 308 residues: Aspartate carbamoyltransferase catalytic subunit (308 aa).

Positions 57 and 58 each coordinate carbamoyl phosphate. Lys-86 provides a ligand contact to L-aspartate. The carbamoyl phosphate site is built by Arg-107, His-135, and Gln-138. Arg-167 and Arg-228 together coordinate L-aspartate. Residues Leu-267 and Pro-268 each coordinate carbamoyl phosphate.

The protein belongs to the aspartate/ornithine carbamoyltransferase superfamily. ATCase family. Heterooligomer of catalytic and regulatory chains.

The catalysed reaction is carbamoyl phosphate + L-aspartate = N-carbamoyl-L-aspartate + phosphate + H(+). Its pathway is pyrimidine metabolism; UMP biosynthesis via de novo pathway; (S)-dihydroorotate from bicarbonate: step 2/3. Catalyzes the condensation of carbamoyl phosphate and aspartate to form carbamoyl aspartate and inorganic phosphate, the committed step in the de novo pyrimidine nucleotide biosynthesis pathway. The protein is Aspartate carbamoyltransferase catalytic subunit of Methanosarcina acetivorans (strain ATCC 35395 / DSM 2834 / JCM 12185 / C2A).